Reading from the N-terminus, the 330-residue chain is MAILAFQKPDKVLMLEADSRFGKFEFRPLEPGFGITVGNALRRILLSSLEGFAITTIRIDGVEHEFSSVPGVKEDVTNIILNLKQVRFKQVVEEFESEKVSITVENSSEFKAGDIGKYLTGFEVLNPELVICHLDSKATMQIDITINKGRGYVPADENREYCTDVNVIPIDSIYTPIRNVKYAVENFRVEQKTDYEKLVLEISTDGSIHPKEALKEAAKILIYHFMLFSDEKITLESNDTDGNEEFDEEVLHMRQLLKTKLVDMDLSVRALNCLKAADVETLGDLVQFNKTDLLKFRNFGKKSLTELDDLLESLNLSFGTDISKYKLDKE.

The segment at 1–232 (MAILAFQKPD…YHFMLFSDEK (232 aa)) is alpha N-terminal domain (alpha-NTD). The segment at 248 to 330 (EEVLHMRQLL…DISKYKLDKE (83 aa)) is alpha C-terminal domain (alpha-CTD).

The protein belongs to the RNA polymerase alpha chain family. Homodimer. The RNAP catalytic core consists of 2 alpha, 1 beta, 1 beta' and 1 omega subunit. When a sigma factor is associated with the core the holoenzyme is formed, which can initiate transcription.

The catalysed reaction is RNA(n) + a ribonucleoside 5'-triphosphate = RNA(n+1) + diphosphate. Functionally, DNA-dependent RNA polymerase catalyzes the transcription of DNA into RNA using the four ribonucleoside triphosphates as substrates. This Bacteroides thetaiotaomicron (strain ATCC 29148 / DSM 2079 / JCM 5827 / CCUG 10774 / NCTC 10582 / VPI-5482 / E50) protein is DNA-directed RNA polymerase subunit alpha.